A 144-amino-acid polypeptide reads, in one-letter code: Giant hemoglobins B chain (144 aa).

A Globin domain is found at 3-144; sequence VCGPLQRLKV…LNVITNGIQG (142 aa). Histidine 96 contributes to the heme b binding site.

It belongs to the globin family. As to quaternary structure, part of giant hemoglobin C1, V1 and V2. This worm has three different extracellular Hbs: two dissolved in the vascular blood, V1 (CA. 3,500 kDa) and V2 (CA. 400 kDa), and one in the coelomic fluid, C1 (CA. 400 kDa). V1 consists of four heme-containing, globin chains (B-E) and four linker chains (L1-L4). V2 consists of six globin chains (A-F) and C1 consists of five globin chains (A-E).

The protein resides in the secreted. Its subcellular location is the extracellular space. The sequence is that of Giant hemoglobins B chain from Riftia pachyptila (Vent tube worm).